Consider the following 92-residue polypeptide: Small ribosomal subunit protein bS21A (92 aa).

Residues 25 to 52 show a composition bias toward basic and acidic residues; that stretch reads GVFREMKQRRSYEKPSERKTREKSEAIR. The tract at residues 25-92 is disordered; it reads GVFREMKQRR…LPQTAARPAG (68 aa).

This sequence belongs to the bacterial ribosomal protein bS21 family.

This chain is Small ribosomal subunit protein bS21A, found in Bradyrhizobium diazoefficiens (strain JCM 10833 / BCRC 13528 / IAM 13628 / NBRC 14792 / USDA 110).